We begin with the raw amino-acid sequence, 378 residues long: D-alanine--D-alanine ligase (378 aa).

In terms of domain architecture, ATP-grasp spans 140 to 346 (KKIISQAGIR…YSDLIDRLIQ (207 aa)). 170–225 (EEKLGNLTFVKPAKQGSSVGIHRVTNAEEYEKALDDAFKYDYKILVEQGIANPQEI) is a binding site for ATP. Mg(2+) is bound by residues D300, E313, and N315.

It belongs to the D-alanine--D-alanine ligase family. It depends on Mg(2+) as a cofactor. Mn(2+) serves as cofactor.

It localises to the cytoplasm. It catalyses the reaction 2 D-alanine + ATP = D-alanyl-D-alanine + ADP + phosphate + H(+). It participates in cell wall biogenesis; peptidoglycan biosynthesis. Its function is as follows. Cell wall formation. The chain is D-alanine--D-alanine ligase from Limosilactobacillus reuteri (strain DSM 20016) (Lactobacillus reuteri).